A 407-amino-acid polypeptide reads, in one-letter code: MVSSTWGYDPRAGAGDLVITTTAAGAVTIAVLLFQTVCGDCGPPPDIPNARPILGRHSKFAEQSKVAYSCNNGFKQVPDKSNIVVCLENGQWSSHETFCEKSCDTPERLSFASLKKEYFNMNFFPVGTIVEYECRPGFRKQPSLSGKSTCLEDLVWSPVAQFCKKKSCPNPKDLDNGHINIPTGILFGSEINFSCNPGYRLVGITSILCTIIGNTVDWDDEFPVCTEIFCPDPPKINNGIMRGESDSYKYSQVVIYSCDKGFILFGNSTIYCTVSKSDVGQWSSPPPQCIEESKVPIKKPVVNVPSTGIPSTPQKPTTESVPNPGDQPTPQKPSTVKVPATQHEPDTTTRTSTDKGESNSGGDRYIYGFVAVIAMIDSLIIVKTLWTILSPNRRSDFQGKERKDVSK.

The first 39 residues, 1–39, serve as a signal peptide directing secretion; that stretch reads MVSSTWGYDPRAGAGDLVITTTAAGAVTIAVLLFQTVCG. Sushi domains lie at 40–101, 102–165, 166–227, and 228–291; these read DCGP…FCEK, SCDT…FCKK, KSCP…VCTE, and IFCP…QCIE. The Extracellular segment spans residues 40 to 368; the sequence is DCGPPPDIPN…NSGGDRYIYG (329 aa). 8 disulfides stabilise this stretch: cysteine 41–cysteine 86, cysteine 70–cysteine 99, cysteine 103–cysteine 150, cysteine 134–cysteine 163, cysteine 168–cysteine 209, cysteine 195–cysteine 225, cysteine 230–cysteine 272, and cysteine 258–cysteine 289. An N-linked (GlcNAc...) asparagine glycan is attached at asparagine 192. The N-linked (GlcNAc...) asparagine glycan is linked to asparagine 267. Residues 301 to 361 are disordered; that stretch reads VVNVPSTGIP…STDKGESNSG (61 aa). A compositionally biased stretch (polar residues) spans 306–324; the sequence is STGIPSTPQKPTTESVPNP. Residues 343–357 are compositionally biased toward basic and acidic residues; the sequence is HEPDTTTRTSTDKGE. A helical membrane pass occupies residues 369–389; it reads FVAVIAMIDSLIIVKTLWTIL. Over 390-407 the chain is Cytoplasmic; sequence SPNRRSDFQGKERKDVSK.

It belongs to the receptors of complement activation (RCA) family. As to expression, testis, spleen and lymph node.

It localises to the membrane. In terms of biological role, this protein recognizes C4b and C3b fragments that condense with cell-surface hydroxyl or amino groups when nascent C4b and C3b are locally generated during C4 and c3 activation. Interaction of daf with cell-associated C4b and C3b polypeptides interferes with their ability to catalyze the conversion of C2 and factor B to enzymatically active C2a and Bb and thereby prevents the formation of C4b2a and C3bBb, the amplification convertases of the complement cascade. Inhibits complement activation by destabilizing and preventing the formation of C3 and C5 convertases, which prevents complement damage. This chain is Complement decay-accelerating factor transmembrane isoform (Cd55b), found in Mus musculus (Mouse).